A 107-amino-acid chain; its full sequence is MAQNKLHVKKGDMVVVISGKDKGKKGKVLQAFPKEGKVIVEGVNIVTKHRKATSPQKPGGIIHQEAPIYSSKVMLYCENCGRGVRYGVKVLENGEKIRYCKRCNETL.

The protein belongs to the universal ribosomal protein uL24 family. Part of the 50S ribosomal subunit.

Its function is as follows. One of two assembly initiator proteins, it binds directly to the 5'-end of the 23S rRNA, where it nucleates assembly of the 50S subunit. Functionally, one of the proteins that surrounds the polypeptide exit tunnel on the outside of the subunit. The chain is Large ribosomal subunit protein uL24 from Thermoanaerobacter pseudethanolicus (strain ATCC 33223 / 39E) (Clostridium thermohydrosulfuricum).